We begin with the raw amino-acid sequence, 2671 residues long: MAADTQVSETLKRFAGKVTTASVKERREILSELGKCVAGKDLPEGAVKGLCKLFCLTLHRYRDAASRRALQAAIQQLAEAQPEATAKNLLHSLQSSGIGSKAGVPSKSSGSAALLALTWTCLLVRIVFPSRAKRQGDIWNKLVEVQCLLLLEVLGGSHKHAVDGAVKKLTKLWKENPGLVEQYLSAILSLEPNQNYAGMLGLLVQFCTSHKEMDVVSQHKSALLDFYMKNILMSKVKPPKYLLDSCAPLLRYLSHSEFKDLILPTIQKSLLRSPENVIETISSLLASVTLDLSQYAMDIVKGLAGHLKSNSPRLMDEAVLALRNLARQCSDSSAMESLTKHLFAILGGSEGKLTVVAQKMSVLSGIGSVSHHVVSGPSSQVLNGIVAELFIPFLQQEVHEGTLVHAVSVLALWCNRFTMEVPKKLTEWFKKAFSLKTSTSAVRHAYLQCMLASYRGDTLLQALDLLPLLIQTVEKAASQSTQVPTITEGVAAALLLLKLSVADSQAEAKLSSFWQLIVDEKKQVFTSEKFLVMASEDALCTVLHLTERLFLDHPHRLTGNKVQQYHRALVAVLLSRTWHVRRQAQQTVRKLLSSLGGFKLAHGLLEELKTVLSSHKVLPLEALVTDAGEVTEAGKAYVPPRVLQEALCVISGVPGLKGDVTDTEQLAQEMLIISHHPSLVAVQSGLWPALLARMKIDPEAFITRHLDQIIPRMTTQSPLNQSSMNAMGSLSVLSPDRVLPQLISTITASVQNPALRLVTREEFAIMQTPAGELYDKSIIQSAQQDSIKKANMKRENKAYSFKEQIIELELKEEIKKKKGIKEEVQLTSKQKEMLQAQLDREAQVRRRLQELDGELEAALGLLDIILAKNPSGLTQYIPVLVDSFLPLLKSPLAAPRIKNPFLSLAACVMPSRLKALGTLVSHVTLRLLKPECVLDKSWCQEELSVAVKRAVMLLHTHTITSRVGKGEPGAAPLSAPAFSLVFPFLKMVLTEMPHHSEEEEEWMAQILQILTVQAQLRASPNTPPGRVDENGPELLPRVAMLRLLTWVIGTGSPRLQVLASDTLTTLCASSSGDDGCAFAEQEEVDVLLCALQSPCASVRETVLRGLMELHMVLPAPDTDEKNGLNLLRRLWVVKFDKEEEIRKLAERLWSMMGLDLQPDLCSLLIDDVIYHEAAVRQAGAEALSQAVARYQRQAAEVMGRLMEIYQEKLYRPPPVLDALGRVISESPPDQWEARCGLALALNKLSQYLDSSQVKPLFQFFVPDALNDRHPDVRKCMLDAALATLNTHGKENVNSLLPVFEEFLKNAPNDASYDAVRQSVVVLMGSLAKHLDKSDPKVKPIVAKLIAALSTPSQQVQESVASCLPPLVPAIKEDAGGMIQRLMQQLLESDKYAERKGAAYGLAGLVKGLGILSLKQQEMMAALTDAIQDKKNFRRREGALFAFEMLCTMLGKLFEPYVVHVLPHLLLCFGDGNQYVREAADDCAKAVMSNLSAHGVKLVLPSLLAALEEESWRTKAGSVELLGAMAYCAPKQLSSCLPNIVPKLTEVLTDSHVKVQKAGQQALRQIGSVIRNPEILAIAPVLLDALTDPSRKTQKCLQTLLDTKFVHFIDAPSLALIMPIVQRAFQDRSTDTRKMAAQIIGNMYSLTDQKDLAPYLPSVTPGLKASLLDPVPEVRTVSAKALGAMVKGMGESCFEDLLPWLMETLTYEQSSVDRSGAAQGLAEVMAGLGVEKLEKLMPEIVATASKVDIAPHVRDGYIMMFNYLPITFGDKFTPYVGPIIPCILKALADENEFVRDTALRAGQRVISMYAETAIALLLPQLEQGLFDDLWRIRFSSVQLLGDLLFHISGVTGKMTTETASEDDNFGTAQSNKAIITALGVERRNRVLAGLYMGRSDTQLVVRQASLHVWKIVVSNTPRTLREILPTLFGLLLGFLASTCADKRTIAARTLGDLVRKLGEKILPEIIPILEEGLRSQKSDERQGVCIGLSEIMKSTSRDAVLYFSESLVPTARKALCDPLEEVREAAAKTFEQLHSTIGHQALEDILPFLLKQLDDEEVSEFALDGLKQVMAIKSRVVLPYLVPKLTTPPVNTRVLAFLSSVAGDALTRHLGVILPAVMLALKEKLGTPDEQLEMANCQAVILSVEDDTGHRIIIEDLLEATRSPEVGMRQAAAIILNIYCSRSKADYTSHLRSLVSGLIRLFNDSSPVVLEESWDALNAITKKLDAGNQLALIEELHKEIRLIGNESKGEHVPGFCLPKKGVTSILPVLREGVLTGSPEQKEEAAKALGLVIRLTSADALRPSVVSITGPLIRILGDRFSWNVKAALLETLSLLLAKVGIALKPFLPQLQTTFTKALQDSNRGVRLKAADALGKLISIHIKVDPLFTELLNGIRAMEDPGVRDTMLQALRFVIQGAGAKVDAVIRKNIVSLLLSMLGHDEDNTRISSAGCLGELCAFLTEEELSAVLQQCLLADVSGIDWMVRHGRSLALSVAVNVAPGRLCAGRYSSDVQEMILSSATADRIPIAVSGVRGMGFLMRHHIETGGGQLPAKLSSLFVKCLQNPSSDIRLVAEKMIWWANKDPLPPLDPQAIKPILKALLDNTKDKNTVVRAYSDQAIVNLLKMRQGEEVFQSLSKILDVASLEVLNEVNRRSLKKLASQADSTEQVDDTILT.

Residue alanine 2 is modified to N-acetylalanine. 10 HEAT repeats span residues asparagine 140–glycine 178, glutamate 257–serine 293, glutamine 294–aspartate 331, isoleucine 385–lysine 423, leucine 425–leucine 459, leucine 460–aspartate 503, asparagine 560–glycine 597, lysine 599–alanine 636, aspartate 697–valine 732, and leucine 733–alanine 770. The residue at position 729 (serine 729) is a Phosphoserine. At serine 786 the chain carries Phosphoserine. The stretch at glutamine 804–aspartate 863 forms a coiled coil. HEAT repeat units follow at residues valine 879–leucine 925, serine 979–leucine 1016, leucine 1035–glycine 1072, phenylalanine 1078–alanine 1115, aspartate 1155–arginine 1192, tyrosine 1210–serine 1250, serine 1251–lysine 1289, glutamate 1290–lysine 1332, proline 1335–glutamate 1372, alanine 1374–isoleucine 1410, leucine 1413–lysine 1451, proline 1455–alanine 1492, histidine 1493–lysine 1530, serine 1534–asparagine 1571, glutamate 1573–aspartate 1609, proline 1611–glutamine 1648, proline 1653–glutamate 1690, cysteine 1692–valine 1729, lysine 1731–aspartate 1769, proline 1773–glutamate 1810, alanine 1812–glycine 1848, glutamate 1921–glutamate 1958, lysine 1959–arginine 1996, tyrosine 2001–histidine 2038, glutamine 2039–valine 2076, proline 2078–threonine 2106, arginine 2107–aspartate 2146, threonine 2147–alanine 2184, serine 2188–alanine 2225, lysine 2259–alanine 2296, proline 2301–glycine 2338, isoleucine 2339–lysine 2380, aspartate 2382–alanine 2417, valine 2422–glutamate 2459, glutamine 2546–proline 2583, and glutamine 2588–glycine 2625. The interval glycine 2260–leucine 2408 is RWDBD region. Phosphoserine is present on serine 2276. The HEAT 47; degenerate repeat unit spans residues glutamate 2627–serine 2661.

Belongs to the GCN1 family. In terms of assembly, interacts with EIF2AK4/GCN2; this interaction stimulates the EIF2AK4/GCN2 kinase activity and is impaired by IMPACT upon a variety of stress conditions, such as amino acid depletion, UV-C irradiation, proteasome inhibitor treatment and glucose deprivation. Interacts with IMPACT; this prevents the interaction of GCN1 with EIF2AK4/GCN2 and inhibits EIF2AK4/GCN2 kinase activity. Interacts with RNF14; interaction takes place following ribosome stalling and promotes recruitment of RNF14. As to expression, ubiquitously expressed. Expressed in skeletal muscules, ovary and testis.

It localises to the cytoplasm. Ribosome collision sensor that plays a key role in the RNF14-RNF25 translation quality control pathway, a pathway that takes place when a ribosome has stalled during translation, and which promotes ubiquitination and degradation of translation factors on stalled ribosomes. Directly binds to the ribosome and acts as a sentinel for colliding ribosomes: activated following ribosome stalling and promotes recruitment of RNF14, which directly ubiquitinates EEF1A1/eEF1A, leading to its degradation. In addition to EEF1A1/eEF1A, the RNF14-RNF25 translation quality control pathway mediates degradation of ETF1/eRF1 and ubiquitination of ribosomal protein. GCN1 also acts as a positive activator of the integrated stress response (ISR) by mediating activation of EIF2AK4/GCN2 in response to amino acid starvation. Interaction with EIF2AK4/GCN2 on translating ribosomes stimulates EIF2AK4/GCN2 kinase activity, leading to phosphorylation of eukaryotic translation initiation factor 2 (eIF-2-alpha/EIF2S1). EIF2S1/eIF-2-alpha phosphorylation converts EIF2S1/eIF-2-alpha into a global protein synthesis inhibitor, leading to a global attenuation of cap-dependent translation, and thus to a reduced overall utilization of amino acids, while concomitantly initiating the preferential translation of ISR-specific mRNAs, such as the transcriptional activator ATF4, and hence allowing ATF4-mediated reprogramming of amino acid biosynthetic gene expression to alleviate nutrient depletion. This Homo sapiens (Human) protein is Stalled ribosome sensor GCN1.